The sequence spans 233 residues: Adenosylcobinamide-GDP ribazoletransferase (233 aa).

7 consecutive transmembrane segments (helical) span residues 24–44 (LWALPLLAPLTSALATLVLYL), 46–66 (LPLSNVLAILALYFTTGLLHL), 96–116 (IAGVFAVVMVFLLQVYSLPLL), 117–137 (PFYALYLAELNSKFAMLLALA), 158–178 (QLTLGTALYLLLLLPVAYIEP), 181–198 (ISSLLGLLAGAYVIRLSL), and 209–229 (IGAVAEITRAGALLGMAVVWV).

The protein belongs to the CobS family. Requires Mg(2+) as cofactor.

Its subcellular location is the cell membrane. It carries out the reaction alpha-ribazole + adenosylcob(III)inamide-GDP = adenosylcob(III)alamin + GMP + H(+). It catalyses the reaction alpha-ribazole 5'-phosphate + adenosylcob(III)inamide-GDP = adenosylcob(III)alamin 5'-phosphate + GMP + H(+). The protein operates within cofactor biosynthesis; adenosylcobalamin biosynthesis; adenosylcobalamin from cob(II)yrinate a,c-diamide: step 7/7. Joins adenosylcobinamide-GDP and alpha-ribazole to generate adenosylcobalamin (Ado-cobalamin). Also synthesizes adenosylcobalamin 5'-phosphate from adenosylcobinamide-GDP and alpha-ribazole 5'-phosphate. This chain is Adenosylcobinamide-GDP ribazoletransferase, found in Thermococcus gammatolerans (strain DSM 15229 / JCM 11827 / EJ3).